The sequence spans 701 residues: Polyribonucleotide nucleotidyltransferase (701 aa).

D487 and D493 together coordinate Mg(2+). The KH domain maps to 554 to 613; that stretch reads PTMLAMKIDQDKIRDVIGKGGATIRAICEETKASIDIEDDGSIKIFGETKEAAEAAKQRV. The S1 motif domain maps to 623 to 691; the sequence is GKIYVGKVER…NRGRIKLSIK (69 aa).

The protein belongs to the polyribonucleotide nucleotidyltransferase family. Component of the RNA degradosome, which is a multiprotein complex involved in RNA processing and mRNA degradation. Mg(2+) serves as cofactor.

The protein localises to the cytoplasm. It catalyses the reaction RNA(n+1) + phosphate = RNA(n) + a ribonucleoside 5'-diphosphate. In terms of biological role, involved in mRNA degradation. Catalyzes the phosphorolysis of single-stranded polyribonucleotides processively in the 3'- to 5'-direction. This Stutzerimonas stutzeri (strain A1501) (Pseudomonas stutzeri) protein is Polyribonucleotide nucleotidyltransferase.